Here is a 121-residue protein sequence, read N- to C-terminus: Large ribosomal subunit protein uL22 (121 aa).

It belongs to the universal ribosomal protein uL22 family. Part of the 50S ribosomal subunit.

Functionally, this protein binds specifically to 23S rRNA; its binding is stimulated by other ribosomal proteins, e.g. L4, L17, and L20. It is important during the early stages of 50S assembly. It makes multiple contacts with different domains of the 23S rRNA in the assembled 50S subunit and ribosome. The globular domain of the protein is located near the polypeptide exit tunnel on the outside of the subunit, while an extended beta-hairpin is found that lines the wall of the exit tunnel in the center of the 70S ribosome. This chain is Large ribosomal subunit protein uL22, found in Synechococcus sp. (strain CC9311).